Consider the following 248-residue polypeptide: Undecaprenyl-diphosphatase (248 aa).

8 consecutive transmembrane segments (helical) span residues 4–24, 40–60, 74–94, 101–121, 134–154, 174–194, 201–221, and 228–248; these read IVLG…SGHL, FAFL…KEIV, YSLV…GFLF, SFSN…SLFV, ISYI…FPGI, ALKY…ILET, SYIL…LLIL, and KKLK…FFVG.

This sequence belongs to the UppP family.

It is found in the cell inner membrane. It catalyses the reaction di-trans,octa-cis-undecaprenyl diphosphate + H2O = di-trans,octa-cis-undecaprenyl phosphate + phosphate + H(+). Functionally, catalyzes the dephosphorylation of undecaprenyl diphosphate (UPP). Confers resistance to bacitracin. The sequence is that of Undecaprenyl-diphosphatase from Thermosipho africanus (strain TCF52B).